A 396-amino-acid polypeptide reads, in one-letter code: 2-(3-amino-3-carboxypropyl)histidine synthase subunit 1 (396 aa).

[4Fe-4S] cluster contacts are provided by cysteine 89, cysteine 194, and cysteine 323. The tract at residues 372–396 (TNNNEANRPKREKRKPHIVVRTEAS) is disordered.

The protein belongs to the DPH1/DPH2 family. DPH1 subfamily. Component of the 2-(3-amino-3-carboxypropyl)histidine synthase complex composed of dph-1, dph-2, dph-3 and a NADH-dependent reductase. The cofactor is [4Fe-4S] cluster.

The catalysed reaction is L-histidyl-[translation elongation factor 2] + S-adenosyl-L-methionine = 2-[(3S)-amino-3-carboxypropyl]-L-histidyl-[translation elongation factor 2] + S-methyl-5'-thioadenosine + H(+). It functions in the pathway protein modification; peptidyl-diphthamide biosynthesis. Functionally, catalyzes the first step of diphthamide biosynthesis, a post-translational modification of histidine which occurs in elongation factor 2. Dph-1 and dph-2 transfer a 3-amino-3-carboxypropyl (ACP) group from S-adenosyl-L-methionine (SAM) to a histidine residue, the reaction is assisted by a reduction system comprising dph-3 and a NADH-dependent reductase. The sequence is that of 2-(3-amino-3-carboxypropyl)histidine synthase subunit 1 (dph-1) from Caenorhabditis elegans.